A 272-amino-acid chain; its full sequence is MSMQEKIMRELHVKPSIDPKQEIEDRVNFLKQYVKKTGAKGFVLGISGGQDSTLAGRLAQLAVESIREEGGDAQFIAVRLPHGTQQDEDDAQLALKFIKPDKSWKFDIKSTVSAFSDQYQQETGDQLTDFNKGNVKARTRMIAQYAIGGQEGLLVLGTDHAAEAVTGFFTKYGDGGADLLPLTGLTKRQGRTLLKELGAPERLYLKEPTADLLDEKPQQSDETELGISYDEIDDYLEGKEVSAKVSEALEKRYSMTEHKRQVPASMFDDWWK.

Tyrosine 33 provides a ligand contact to deamido-NAD(+). Residues 45-52, arginine 79, and glutamine 85 each bind ATP; that span reads GISGGQDS. Position 51 (aspartate 51) interacts with Mg(2+). Residue arginine 138 coordinates deamido-NAD(+). ATP is bound at residue threonine 158. Glutamate 163 serves as a coordination point for Mg(2+). Residues lysine 171 and aspartate 178 each contribute to the deamido-NAD(+) site. ATP is bound by residues lysine 187 and threonine 209. Deamido-NAD(+) contacts are provided by residues glutamate 224 and 258–259; that span reads HK.

This sequence belongs to the NAD synthetase family. Homodimer. In terms of processing, phosphorylated during sporulation.

It carries out the reaction deamido-NAD(+) + NH4(+) + ATP = AMP + diphosphate + NAD(+) + H(+). Its pathway is cofactor biosynthesis; NAD(+) biosynthesis; NAD(+) from deamido-NAD(+) (ammonia route): step 1/1. Functionally, catalyzes the ATP-dependent amidation of deamido-NAD to form NAD. Uses ammonia as a nitrogen source. This chain is NH(3)-dependent NAD(+) synthetase, found in Bacillus subtilis (strain 168).